A 321-amino-acid chain; its full sequence is Probable pectate lyase A (321 aa).

The N-terminal stretch at 1–20 (MANFKLFLALAACLSGQALA) is a signal peptide. A glycan (N-linked (GlcNAc...) asparagine) is linked at asparagine 93. 3 residues coordinate Ca(2+): aspartate 134, aspartate 163, and aspartate 167. Residue arginine 220 is part of the active site.

The protein belongs to the polysaccharide lyase 1 family. Requires Ca(2+) as cofactor.

It is found in the secreted. The catalysed reaction is Eliminative cleavage of (1-&gt;4)-alpha-D-galacturonan to give oligosaccharides with 4-deoxy-alpha-D-galact-4-enuronosyl groups at their non-reducing ends.. Pectinolytic enzyme consist of four classes of enzymes: pectin lyase, polygalacturonase, pectin methylesterase and rhamnogalacturonase. Among pectinolytic enzymes, pectin lyase is the most important in depolymerization of pectin, since it cleaves internal glycosidic bonds of highly methylated pectins. Favors pectate, the anion, over pectin, the methyl ester. The sequence is that of Probable pectate lyase A (plyA) from Aspergillus flavus (strain ATCC 200026 / FGSC A1120 / IAM 13836 / NRRL 3357 / JCM 12722 / SRRC 167).